Here is a 341-residue protein sequence, read N- to C-terminus: MPKPSVGINGFGRIGRLVLRAAVEKDSVNVVAVNDPFISIDYMVYLFQYDSTHGRFKGTVAHEGDYLLVAKEGKSQHKIKVYNSRDPAEIQWGASGADYVVESTGVFTTIEKANAHLKGGAKKVIISAPSADAPMFVVGVNHEKYDHANDHIISNASCTTNCLAPLAKVINDNFGIIEGLMTTVHAVTATQKTVDGPSGKLWRDGRGAGQNIIPASTGAAKAVGKVIPELNGKLTGMAFRVPTPDVSVVDLTARLEKPASLDDIKKVIKAAADGPMKGILAYTEDQVVSTDFVSDTNSSIFDAGASISLNPHFVKLVSWYDNEFGYSNRVVDLISYIATKA.

Residues 13–14 (RI), Asp35, and Arg85 each bind NAD(+). D-glyceraldehyde 3-phosphate is bound by residues 157–159 (SCT), Thr188, 217–218 (TG), and Arg240. The Nucleophile role is filled by Cys158. Asn322 lines the NAD(+) pocket.

It belongs to the glyceraldehyde-3-phosphate dehydrogenase family. Homotetramer.

The protein resides in the cytoplasm. The enzyme catalyses D-glyceraldehyde 3-phosphate + phosphate + NAD(+) = (2R)-3-phospho-glyceroyl phosphate + NADH + H(+). Its pathway is carbohydrate degradation; glycolysis; pyruvate from D-glyceraldehyde 3-phosphate: step 1/5. In Caenorhabditis elegans, this protein is Glyceraldehyde-3-phosphate dehydrogenase 2 (gpd-2).